Consider the following 394-residue polypeptide: S-adenosylmethionine synthase (394 aa).

His-18 contributes to the ATP binding site. Mg(2+) is bound at residue Asp-20. Glu-46 serves as a coordination point for K(+). The L-methionine site is built by Glu-59 and Gln-104. Residues 104–114 (QSPDIAQGVDA) are flexible loop. Residues 174-176 (DCK), 240-241 (KF), Asp-249, 255-256 (RK), Ala-272, and Lys-276 contribute to the ATP site. L-methionine is bound at residue Asp-249. Lys-280 contacts L-methionine.

This sequence belongs to the AdoMet synthase family. As to quaternary structure, homotetramer; dimer of dimers. It depends on Mg(2+) as a cofactor. Requires K(+) as cofactor.

The protein localises to the cytoplasm. It catalyses the reaction L-methionine + ATP + H2O = S-adenosyl-L-methionine + phosphate + diphosphate. Its pathway is amino-acid biosynthesis; S-adenosyl-L-methionine biosynthesis; S-adenosyl-L-methionine from L-methionine: step 1/1. Its function is as follows. Catalyzes the formation of S-adenosylmethionine (AdoMet) from methionine and ATP. The overall synthetic reaction is composed of two sequential steps, AdoMet formation and the subsequent tripolyphosphate hydrolysis which occurs prior to release of AdoMet from the enzyme. This chain is S-adenosylmethionine synthase, found in Akkermansia muciniphila (strain ATCC BAA-835 / DSM 22959 / JCM 33894 / BCRC 81048 / CCUG 64013 / CIP 107961 / Muc).